Consider the following 562-residue polypeptide: Protein TBF1 (562 aa).

Residues 376-414 are disordered; the sequence is ASMSNSSSGPHSSHNNSSNSNNNGSIGLRKPKAKRTWSK. Residues 377 to 400 are compositionally biased toward low complexity; sequence SMSNSSSGPHSSHNNSSNSNNNGS. The 57-residue stretch at 404 to 460 folds into the HTH myb-type domain; sequence RKPKAKRTWSKEEEEALVEGLKEVGPSWSKILDLYGPGGKITENLKNRTQVQLKDKA. Positions 431 to 456 form a DNA-binding region, H-T-H motif; the sequence is WSKILDLYGPGGKITENLKNRTQVQL. A disordered region spans residues 495–562; sequence FSQSPNSSTI…GFDPHLEDGM (68 aa). Polar residues-rich tracts occupy residues 496-522 and 532-552; these read SQSP…ATED and GQNS…SDNT.

Homodimer.

The protein localises to the nucleus. It is found in the chromosome. It localises to the telomere. Its function is as follows. Binds the telomeric double-stranded TTAGGG repeat and negatively regulates telomere length. Involved in the regulation of gene expression. 52 binding sites have been identified, distributed over 15 chromosomes. A member of the general regulatory factors (GRFs) which act as genome partitioners. Acts as a chromatin insulator which are known as STARs (Subtelomeric anti-silencing region). STARs prevent negative or positive transcription influence by extending across chromatin to a promoter. The chain is Protein TBF1 (TBF1) from Saccharomyces cerevisiae (strain ATCC 204508 / S288c) (Baker's yeast).